The sequence spans 1240 residues: MARQQAPPWVHIALILFLLSLGGAIEIPMDPSIQNELTQPPTITKQSVKDHIVDPRDNILIECEAKGNPAPSFHWTRNSRFFNIAKDPRVSMRRRSGTLVIDFRSGGRPEEYEGEYQCFARNKFGTALSNRIRLQVSKSPLWPKENLDPVVVQEGAPLTLQCNPPPGLPSPVIFWMSSSMEPITQDKRVSQGHNGDLYFSNVMLQDMQTDYSCNARFHFTHTIQQKNPFTLKVLTTRGVAERTPSFMYPQGTSSSQMVLRGMDLLLECIASGVPTPDIAWYKKGGDLPSNKAKFENFNKALRITNVSEEDSGEYFCLASNKMGSIRHTISVRVKAAPYWLDEPKNLILAPGEDGRLVCRANGNPKPTVQWMVNGEPLQSAPPNPNREVAGDTIIFRDTQISSRAVYQCNTSNEHGYLLANAFVSVLDVPPRMLSARNQLIRVILYNRTRLDCPFFGSPIPTLRWFKNGQGSNLDGGNYHVYENGSLEIKMIRKEDQGIYTCVATNILGKAENQVRLEVKDPTRIYRMPEDQVAKRGTTVQLECRVKHDPSLKLTVSWLKDDEPLYIGNRMKKEDDSLTIFGVAERDQGSYTCMASTELDQDLAKAYLTVLADQATPTNRLAALPKGRPDRPRDLELTDLAERSVRLTWIPGDDNNSPITDYVVQFEEDQFQPGVWHDHSRFPGSVNSAVLHLSPYVNYQFRVIAVNEVGSSHPSLPSERYRTSGAPPESNPSDVKGEGTRKNNMEITWTPMNATSAFGPNLRYIVKWRRRETRETWNNVTVWGSRYVVGQTPVYVPYEIRVQAENDFGKGPEPDTIIGYSGEDLPSAPRRFRVRQPNLETINLEWDHPEHPNGILIGYILRYVPFNGTKLGKQMVENFSPNQTKFSVQRADPVSRYRFSLSARTQVGSGEAATEESPAPPNEATPTAAPPTLPPTTVGTTGLVSSTDATALAATSEATTVPIIPTVVPTTVATTIATTTTTTAATTTTTTTESPPTTTAGTKIHETAPDEQSIWNVTVLPNSKWANITWKHNFRPGTDFVVEYIDSNHTKKTVPVKAQAQPIQLTDLFPGMTYTLRVYSRDNEGISSTVITFMTSTAYTNNQADIATQGWFIGLMCAIALLVLILLIVCFIKRSRGGKYPVREKKDVPLGPEDPKEEDGSFDYSDEDNKPLQGSQTSLDGTIKQQESDDSLVDYGEGGEGQFNEDGSFIGQYTVKKDKEETEGNESSEATSPVNAIYSLA.

The N-terminal stretch at 1–24 (MARQQAPPWVHIALILFLLSLGGA) is a signal peptide. Residues 25–1110 (IEIPMDPSIQ…NQADIATQGW (1086 aa)) lie on the Extracellular side of the membrane. Ig-like C2-type domains lie at 41–137 (PTIT…LQVS), 143–230 (PKEN…NPFT), 244–332 (PSFM…ISVR), 337–424 (PYWL…AFVS), 430–517 (PRML…VRLE), and 521–603 (PTRI…QDLA). Intrachain disulfides connect C63–C118, C162–C213, C268–C316, and C358–C408. N-linked (GlcNAc...) asparagine glycosylation is present at N305. N-linked (GlcNAc...) asparagine glycans are attached at residues N409 and N446. 2 cysteine pairs are disulfide-bonded: C452–C501 and C543–C592. Y481 bears the Phosphotyrosine mark. N483 carries an N-linked (GlcNAc...) asparagine glycan. S485 is subject to Phosphoserine. Fibronectin type-III domains lie at 630–725 (RPRD…TSGA), 727–823 (PESN…SGED), 827–923 (APRR…PNEA), and 1007–1099 (APDE…TAYT). Residues 710-740 (SSHPSLPSERYRTSGAPPESNPSDVKGEGTR) are disordered. 4 N-linked (GlcNAc...) asparagine glycosylation sites follow: N752, N778, N866, and N881. Residues 902–942 (ARTQVGSGEAATEESPAPPNEATPTAAPPTLPPTTVGTTGL) are disordered. Over residues 907 to 916 (GSGEAATEES) the composition is skewed to low complexity. Pro residues predominate over residues 917–933 (PAPPNEATPTAAPPTLP). Residues 1111-1131 (FIGLMCAIALLVLILLIVCFI) form a helical membrane-spanning segment. Residues 1132-1240 (KRSRGGKYPV…SPVNAIYSLA (109 aa)) lie on the Cytoplasmic side of the membrane. The segment at 1141–1240 (VREKKDVPLG…SPVNAIYSLA (100 aa)) is disordered. Residues 1154–1165 (PKEEDGSFDYSD) are compositionally biased toward acidic residues. A phosphoserine mark is found at S1160, S1174, S1187, S1190, S1226, S1227, and S1231. Over residues 1171-1184 (LQGSQTSLDGTIKQ) the composition is skewed to polar residues.

It belongs to the immunoglobulin superfamily. L1/neurofascin/NgCAM family. In terms of assembly, horseshoe-shaped homodimer. Probable constituent of a NFASC/NRCAM/ankyrin-G complex. Associates with the sodium channel beta-1 (SCN1B) and beta-3 (SCN3B) subunits. Interacts with GLDN/gliomedin. Interacts with MYOC.

It localises to the cell membrane. Its function is as follows. Cell adhesion, ankyrin-binding protein which may be involved in neurite extension, axonal guidance, synaptogenesis, myelination and neuron-glial cell interactions. The protein is Neurofascin (Nfasc) of Mus musculus (Mouse).